A 405-amino-acid polypeptide reads, in one-letter code: Arginine biosynthesis bifunctional protein ArgJ (405 aa).

Residues 1–18 (MTSADKNNPDTSTAQGSS) show a composition bias toward polar residues. A disordered region spans residues 1–21 (MTSADKNNPDTSTAQGSSADL). The substrate site is built by Thr167, Lys189, Thr200, Glu281, Asn400, and Thr405. Thr200 (nucleophile) is an active-site residue.

This sequence belongs to the ArgJ family. As to quaternary structure, heterotetramer of two alpha and two beta chains.

The protein localises to the cytoplasm. It catalyses the reaction N(2)-acetyl-L-ornithine + L-glutamate = N-acetyl-L-glutamate + L-ornithine. It carries out the reaction L-glutamate + acetyl-CoA = N-acetyl-L-glutamate + CoA + H(+). The protein operates within amino-acid biosynthesis; L-arginine biosynthesis; L-ornithine and N-acetyl-L-glutamate from L-glutamate and N(2)-acetyl-L-ornithine (cyclic): step 1/1. It participates in amino-acid biosynthesis; L-arginine biosynthesis; N(2)-acetyl-L-ornithine from L-glutamate: step 1/4. Functionally, catalyzes two activities which are involved in the cyclic version of arginine biosynthesis: the synthesis of N-acetylglutamate from glutamate and acetyl-CoA as the acetyl donor, and of ornithine by transacetylation between N(2)-acetylornithine and glutamate. The chain is Arginine biosynthesis bifunctional protein ArgJ from Corynebacterium jeikeium (strain K411).